A 319-amino-acid chain; its full sequence is Tryptophan--tRNA ligase (319 aa).

ATP-binding positions include 8–10 (QPS) and 16–17 (GN). A 'HIGH' region motif is present at residues 9–17 (PSGDLHIGN). An L-tryptophan-binding site is contributed by Asp131. Residues 143–145 (GKD), Val182, and 189–193 (KMSKS) contribute to the ATP site. The short motif at 189–193 (KMSKS) is the 'KMSKS' region element.

This sequence belongs to the class-I aminoacyl-tRNA synthetase family. In terms of assembly, homodimer.

It localises to the cytoplasm. It catalyses the reaction tRNA(Trp) + L-tryptophan + ATP = L-tryptophyl-tRNA(Trp) + AMP + diphosphate + H(+). Catalyzes the attachment of tryptophan to tRNA(Trp). The chain is Tryptophan--tRNA ligase from Campylobacter jejuni subsp. jejuni serotype O:2 (strain ATCC 700819 / NCTC 11168).